Reading from the N-terminus, the 376-residue chain is Queuine tRNA-ribosyltransferase (376 aa).

Aspartate 92 functions as the Proton acceptor in the catalytic mechanism. Residues 92–96 (DSGGF), aspartate 146, glutamine 190, and glycine 217 each bind substrate. Residues 248–254 (GVGRPED) are RNA binding. The active-site Nucleophile is aspartate 267. The segment at 272–276 (TRNAR) is RNA binding; important for wobble base 34 recognition. Residues cysteine 305, cysteine 307, cysteine 310, and histidine 337 each contribute to the Zn(2+) site.

The protein belongs to the queuine tRNA-ribosyltransferase family. As to quaternary structure, homodimer. Within each dimer, one monomer is responsible for RNA recognition and catalysis, while the other monomer binds to the replacement base PreQ1. Requires Zn(2+) as cofactor.

It catalyses the reaction 7-aminomethyl-7-carbaguanine + guanosine(34) in tRNA = 7-aminomethyl-7-carbaguanosine(34) in tRNA + guanine. It participates in tRNA modification; tRNA-queuosine biosynthesis. Catalyzes the base-exchange of a guanine (G) residue with the queuine precursor 7-aminomethyl-7-deazaguanine (PreQ1) at position 34 (anticodon wobble position) in tRNAs with GU(N) anticodons (tRNA-Asp, -Asn, -His and -Tyr). Catalysis occurs through a double-displacement mechanism. The nucleophile active site attacks the C1' of nucleotide 34 to detach the guanine base from the RNA, forming a covalent enzyme-RNA intermediate. The proton acceptor active site deprotonates the incoming PreQ1, allowing a nucleophilic attack on the C1' of the ribose to form the product. After dissociation, two additional enzymatic reactions on the tRNA convert PreQ1 to queuine (Q), resulting in the hypermodified nucleoside queuosine (7-(((4,5-cis-dihydroxy-2-cyclopenten-1-yl)amino)methyl)-7-deazaguanosine). This is Queuine tRNA-ribosyltransferase from Stenotrophomonas maltophilia (strain K279a).